Consider the following 436-residue polypeptide: Serine hydroxymethyltransferase (436 aa).

Residues Leu133 and 137–139 contribute to the (6S)-5,6,7,8-tetrahydrofolate site; that span reads GHL. Lys242 carries the N6-(pyridoxal phosphate)lysine modification. Residue 366 to 368 participates in (6S)-5,6,7,8-tetrahydrofolate binding; sequence SPF.

It belongs to the SHMT family. In terms of assembly, homodimer. Pyridoxal 5'-phosphate serves as cofactor.

The protein localises to the cytoplasm. The enzyme catalyses (6R)-5,10-methylene-5,6,7,8-tetrahydrofolate + glycine + H2O = (6S)-5,6,7,8-tetrahydrofolate + L-serine. Its pathway is one-carbon metabolism; tetrahydrofolate interconversion. The protein operates within amino-acid biosynthesis; glycine biosynthesis; glycine from L-serine: step 1/1. Functionally, catalyzes the reversible interconversion of serine and glycine with tetrahydrofolate (THF) serving as the one-carbon carrier. This reaction serves as the major source of one-carbon groups required for the biosynthesis of purines, thymidylate, methionine, and other important biomolecules. Also exhibits THF-independent aldolase activity toward beta-hydroxyamino acids, producing glycine and aldehydes, via a retro-aldol mechanism. In Novosphingobium aromaticivorans (strain ATCC 700278 / DSM 12444 / CCUG 56034 / CIP 105152 / NBRC 16084 / F199), this protein is Serine hydroxymethyltransferase.